A 116-amino-acid chain; its full sequence is MSWRGRSTYRPRPRRYVEPPEMIGPMRPEQFSDEVEPATPEEGEPATQRQDPAAAQEGEDEGASAGQGPKPEAHSQEQGHPQTGCECEDGPDGQEMDPPNPEEVKTPEEGEKQSQC.

Residues 1–116 form a disordered region; that stretch reads MSWRGRSTYR…PEEGEKQSQC (116 aa). Acidic residues-rich tracts occupy residues 31 to 44 and 86 to 95; these read FSDEVEPATPEEGE and ECEDGPDGQE. Residues 102–116 show a composition bias toward basic and acidic residues; it reads EEVKTPEEGEKQSQC.

It belongs to the GAGE family. Expressed in a variety of tumor tissues but not in normal tissues, except testis.

In terms of biological role, antigen, recognized on melanoma by autologous cytolytic T-lymphocytes. The chain is G antigen 2B/2C (GAGE2B) from Homo sapiens (Human).